Here is a 367-residue protein sequence, read N- to C-terminus: Cytochrome b (367 aa).

The next 4 helical transmembrane spans lie at 25–45 (FGSM…FLAI), 69–90 (WIMQ…YIHI), 105–125 (WLSG…GYVL), and 170–190 (FFAL…IHII). Heme b contacts are provided by histidine 75 and histidine 89. The heme b site is built by histidine 174 and histidine 188. Histidine 193 is an a ubiquinone binding site. Helical transmembrane passes span 218 to 238 (YKDV…MSFT), 280 to 300 (LGGT…PFTH), 312 to 332 (LTQA…WTAT), and 339 to 358 (FIFI…IINP).

It belongs to the cytochrome b family. The cytochrome bc1 complex contains 3 respiratory subunits (MT-CYB, CYC1 and UQCRFS1), 2 core proteins (UQCRC1 and UQCRC2) and probably 6 low-molecular weight proteins. Requires heme b as cofactor.

It localises to the mitochondrion inner membrane. Functionally, component of the ubiquinol-cytochrome c reductase complex (complex III or cytochrome b-c1 complex) that is part of the mitochondrial respiratory chain. The b-c1 complex mediates electron transfer from ubiquinol to cytochrome c. Contributes to the generation of a proton gradient across the mitochondrial membrane that is then used for ATP synthesis. This Austrelaps superbus (Lowland copperhead snake) protein is Cytochrome b (MT-CYB).